The following is a 61-amino-acid chain: MAKKSMIAKQKRTPKFKVQEYTRCERCGRPHSVYRKFKLCRICFRELAYKGQIPGVKKASW.

Zn(2+) is bound by residues C24, C27, C40, and C43.

This sequence belongs to the universal ribosomal protein uS14 family. Zinc-binding uS14 subfamily. Part of the 30S ribosomal subunit. Contacts proteins S3 and S10. Zn(2+) serves as cofactor.

Its function is as follows. Binds 16S rRNA, required for the assembly of 30S particles and may also be responsible for determining the conformation of the 16S rRNA at the A site. The sequence is that of Small ribosomal subunit protein uS14 from Bacillus anthracis (strain A0248).